A 91-amino-acid chain; its full sequence is Probable Fe(2+)-trafficking protein (91 aa).

It belongs to the Fe(2+)-trafficking protein family.

Functionally, could be a mediator in iron transactions between iron acquisition and iron-requiring processes, such as synthesis and/or repair of Fe-S clusters in biosynthetic enzymes. This chain is Probable Fe(2+)-trafficking protein, found in Thiobacillus denitrificans (strain ATCC 25259 / T1).